A 393-amino-acid polypeptide reads, in one-letter code: MQFDTIELAIEALRNGESIIVVDDEDRENEGDLVAVTEWMDDNTINFMAKEGRGLICAPIDKSIAERLKLQSMEQNNTDIYGTHFTVSIDHYKTTTGISAHERTQTARALIDENTNPEDFHRPGHLFPLIAKENGVLTRNGHTEAAVDLARLTGAQPAGVICEIMNDDGTMAKGEDLQSFKERHHLKMITIKSLVAFRKAVELNVNLKAKVKMPTDFGHFDMYGFTTDYSDEEIVAIVKGDLKSNPNVRMHSACLTGDIFHSQRCDCGAQLEASMKYIDEHGGMIIYLPQEGRGIGLINKLRAYELIEKGYDTVTANLALGFDEDLRDYHVAAEILKYFDISEINLLSNNPKKFEGLEDYGIEIVDRIELIVPETQYNHSYMETKKNKMGHLI.

The DHBP synthase stretch occupies residues 1 to 200 (MQFDTIELAI…IKSLVAFRKA (200 aa)). D-ribulose 5-phosphate-binding positions include 27-28 (RE), Asp-32, 139-143 (RNGHT), and Glu-163. Glu-28 provides a ligand contact to Mg(2+). His-142 serves as a coordination point for Mg(2+). Residues 201 to 393 (VELNVNLKAK…TKKNKMGHLI (193 aa)) form a GTP cyclohydrolase II region. A GTP-binding site is contributed by 249-253 (RMHSA). Cys-254, Cys-265, and Cys-267 together coordinate Zn(2+). GTP contacts are provided by residues Gln-270, 291–293 (EGR), and Thr-313. Residue Asp-325 is the Proton acceptor; for GTP cyclohydrolase activity of the active site. The Nucleophile; for GTP cyclohydrolase activity role is filled by Arg-327. GTP-binding residues include Ser-348 and Lys-353.

This sequence in the N-terminal section; belongs to the DHBP synthase family. In the C-terminal section; belongs to the GTP cyclohydrolase II family. Requires Mg(2+) as cofactor. Mn(2+) serves as cofactor. It depends on Zn(2+) as a cofactor.

It catalyses the reaction D-ribulose 5-phosphate = (2S)-2-hydroxy-3-oxobutyl phosphate + formate + H(+). The enzyme catalyses GTP + 4 H2O = 2,5-diamino-6-hydroxy-4-(5-phosphoribosylamino)-pyrimidine + formate + 2 phosphate + 3 H(+). The protein operates within cofactor biosynthesis; riboflavin biosynthesis; 2-hydroxy-3-oxobutyl phosphate from D-ribulose 5-phosphate: step 1/1. Its pathway is cofactor biosynthesis; riboflavin biosynthesis; 5-amino-6-(D-ribitylamino)uracil from GTP: step 1/4. Catalyzes the conversion of D-ribulose 5-phosphate to formate and 3,4-dihydroxy-2-butanone 4-phosphate. Its function is as follows. Catalyzes the conversion of GTP to 2,5-diamino-6-ribosylamino-4(3H)-pyrimidinone 5'-phosphate (DARP), formate and pyrophosphate. The polypeptide is Riboflavin biosynthesis protein RibBA (Staphylococcus epidermidis (strain ATCC 12228 / FDA PCI 1200)).